We begin with the raw amino-acid sequence, 947 residues long: Beta-glucosidase (947 aa).

Residue Asp-696 is part of the active site.

This sequence belongs to the glycosyl hydrolase 3 family.

It catalyses the reaction Hydrolysis of terminal, non-reducing beta-D-glucosyl residues with release of beta-D-glucose.. The protein operates within glycan metabolism; cellulose degradation. The polypeptide is Beta-glucosidase (Ruminococcus albus).